A 71-amino-acid polypeptide reads, in one-letter code: MSKDDLIQFTGTVLELLPNANFRVKLENDHLIIAHTSGRMRKNRIRILLGDKVTVEMTPYDLTKGRVIHRH.

The S1-like domain occupies 1–71 (MSKDDLIQFT…LTKGRVIHRH (71 aa)).

It belongs to the IF-1 family. As to quaternary structure, component of the 30S ribosomal translation pre-initiation complex which assembles on the 30S ribosome in the order IF-2 and IF-3, IF-1 and N-formylmethionyl-tRNA(fMet); mRNA recruitment can occur at any time during PIC assembly.

It is found in the cytoplasm. Its function is as follows. One of the essential components for the initiation of protein synthesis. Stabilizes the binding of IF-2 and IF-3 on the 30S subunit to which N-formylmethionyl-tRNA(fMet) subsequently binds. Helps modulate mRNA selection, yielding the 30S pre-initiation complex (PIC). Upon addition of the 50S ribosomal subunit IF-1, IF-2 and IF-3 are released leaving the mature 70S translation initiation complex. The chain is Translation initiation factor IF-1 from Rickettsia canadensis (strain McKiel).